We begin with the raw amino-acid sequence, 330 residues long: Malate dehydrogenase (330 aa).

Residue Gly15 to Ala21 participates in NAD(+) binding. Positions 96 and 102 each coordinate substrate. Residues Asn109, Gln116, and Val133–Asn135 contribute to the NAD(+) site. Substrate contacts are provided by Asn135 and Arg166. The Proton acceptor role is filled by His191.

Belongs to the LDH/MDH superfamily. MDH type 2 family.

It catalyses the reaction (S)-malate + NAD(+) = oxaloacetate + NADH + H(+). In terms of biological role, catalyzes the reversible oxidation of malate to oxaloacetate. The chain is Malate dehydrogenase from Chlamydia caviae (strain ATCC VR-813 / DSM 19441 / 03DC25 / GPIC) (Chlamydophila caviae).